Reading from the N-terminus, the 94-residue chain is UPF0768 protein YBL029C-A (94 aa).

This sequence belongs to the UPF0768 family.

Its subcellular location is the cell membrane. The sequence is that of UPF0768 protein YBL029C-A from Saccharomyces cerevisiae (strain ATCC 204508 / S288c) (Baker's yeast).